Reading from the N-terminus, the 111-residue chain is Cell division protein FtsB (111 aa).

Over 1–3 (MRL) the chain is Cytoplasmic. A helical transmembrane segment spans residues 4–21 (ITLFLLLLLLAIQYPLWL). Over 22 to 111 (GKGGWLRVWD…PPPAGQQAHH (90 aa)) the chain is Periplasmic. A coiled-coil region spans residues 31–64 (DMQKQVTAQNQRNAELKQRNTKLEGEVKDLKEGT). Residues 89-111 (APAPKTSETPLPPPPPAGQQAHH) form a disordered region.

Belongs to the FtsB family. Part of a complex composed of FtsB, FtsL and FtsQ.

Its subcellular location is the cell inner membrane. Essential cell division protein. May link together the upstream cell division proteins, which are predominantly cytoplasmic, with the downstream cell division proteins, which are predominantly periplasmic. In Ralstonia pickettii (strain 12J), this protein is Cell division protein FtsB.